A 566-amino-acid polypeptide reads, in one-letter code: MOB kinase activator-like 2 (566 aa).

2 disordered regions span residues 28 to 57 (ADAT…SSLS) and 74 to 118 (GRAV…GAQA). Residues 35–57 (SSTAPQTPTASTPRPSSSHSSLS) show a composition bias toward low complexity. Positions 85–115 (QNGGKGNASGAGGGAGGGGAGGASGGTGGTG) are enriched in gly residues. Positions 209, 214, 289, and 294 each coordinate Zn(2+). 2 disordered regions span residues 346 to 407 (GGCQ…SASA) and 498 to 541 (FSNN…QCNA). The span at 367-388 (LQHQSLQQQQQHHNSSSNSTSS) shows a compositional bias: low complexity. The span at 394 to 407 (VNSQSNNGSTSASA) shows a compositional bias: polar residues. A compositionally biased stretch (low complexity) spans 498 to 507 (FSNNNNNNHN). The span at 508-526 (LNHHHHHHHHHGHHGHHHA) shows a compositional bias: basic residues.

Belongs to the MOB1/phocein family. Interacts with and activates trc, also interacts with wts.

Its subcellular location is the cytoplasm. It localises to the nucleus. Its function is as follows. Required for the normal morphogenesis of a variety of polarized outgrowths including epidermal hairs, bristles, arista laterals, and dendrites. In Drosophila melanogaster (Fruit fly), this protein is MOB kinase activator-like 2 (Mob2).